A 249-amino-acid polypeptide reads, in one-letter code: uncharacterized protein (249 aa).

It localises to the cytoplasm. It is found in the nucleus. The protein localises to the nucleolus. This is an uncharacterized protein from Schizosaccharomyces pombe (strain 972 / ATCC 24843) (Fission yeast).